Reading from the N-terminus, the 119-residue chain is Large ribosomal subunit protein bL20 (119 aa).

It belongs to the bacterial ribosomal protein bL20 family.

Functionally, binds directly to 23S ribosomal RNA and is necessary for the in vitro assembly process of the 50S ribosomal subunit. It is not involved in the protein synthesizing functions of that subunit. The protein is Large ribosomal subunit protein bL20 of Heliobacterium modesticaldum (strain ATCC 51547 / Ice1).